The sequence spans 175 residues: NADH-ubiquinone oxidoreductase chain 6 (175 aa).

A run of 5 helical transmembrane segments spans residues 1-21, 24-44, 46-66, 86-106, and 149-169; these read MMYT…GVSS, SPVY…GIVV, FGGS…MMVV, IVVL…VVYL, and YGCW…FIVI.

The protein belongs to the complex I subunit 6 family. Core subunit of respiratory chain NADH dehydrogenase (Complex I) which is composed of 45 different subunits.

Its subcellular location is the mitochondrion inner membrane. The catalysed reaction is a ubiquinone + NADH + 5 H(+)(in) = a ubiquinol + NAD(+) + 4 H(+)(out). Core subunit of the mitochondrial membrane respiratory chain NADH dehydrogenase (Complex I) which catalyzes electron transfer from NADH through the respiratory chain, using ubiquinone as an electron acceptor. Essential for the catalytic activity and assembly of complex I. The protein is NADH-ubiquinone oxidoreductase chain 6 (MT-ND6) of Dugong dugon (Dugong).